Consider the following 241-residue polypeptide: Chloride intracellular channel protein 1 (241 aa).

A2 bears the N-acetylalanine mark. A required for insertion into the membrane region spans residues 2-90 (AEEQPQVELF…EEFLEAVLCP (89 aa)). K13 is subject to N6-acetyllysine. Positions 24 to 27 (CPFS) match the G-site motif. C24 and C59 are oxidised to a cystine. Residues 26 to 46 (FSQRLFMVLWLKGVTFNVTTV) traverse the membrane as a helical segment. Residues 93-233 (YPKLAALNPE…PDDEEIELAY (141 aa)) form the GST C-terminal domain. K119 bears the N6-acetyllysine mark. At S121 the chain carries Phosphoserine. Position 131 is an N6-acetyllysine (K131). A phosphoserine mark is found at S156 and S211. Y233 is subject to Phosphotyrosine.

It belongs to the chloride channel CLIC family. Monomer. Homodimer (in vitro). Interacts with TRAPPC2. Dimerization requires a conformation change that leads to the exposure of a large hydrophobic surface. In vivo, this may lead to membrane insertion.

It is found in the nucleus. The protein resides in the nucleus membrane. The protein localises to the cytoplasm. It localises to the cell membrane. Its subcellular location is the endoplasmic reticulum. The enzyme catalyses L-dehydroascorbate + 2 glutathione = glutathione disulfide + L-ascorbate. It carries out the reaction chloride(in) = chloride(out). The catalysed reaction is iodide(out) = iodide(in). It catalyses the reaction thiocyanate(in) = thiocyanate(out). The enzyme catalyses nitrate(in) = nitrate(out). It carries out the reaction bromide(in) = bromide(out). The catalysed reaction is fluoride(in) = fluoride(out). In the soluble state, catalyzes glutaredoxin-like thiol disulfide exchange reactions with reduced glutathione as electron donor. Reduces selenite and dehydroascorbate and may act as an antioxidant during oxidative stress response. Can insert into membranes and form voltage-dependent multi-ion conductive channels. Membrane insertion seems to be redox-regulated and may occur only under oxidizing conditions. Involved in regulation of the cell cycle. In Oryctolagus cuniculus (Rabbit), this protein is Chloride intracellular channel protein 1 (CLIC1).